Consider the following 496-residue polypeptide: L-arabinose isomerase (496 aa).

Residues Glu-306, Glu-331, His-348, and His-447 each coordinate Mn(2+).

This sequence belongs to the arabinose isomerase family. Requires Mn(2+) as cofactor.

It carries out the reaction beta-L-arabinopyranose = L-ribulose. It functions in the pathway carbohydrate degradation; L-arabinose degradation via L-ribulose; D-xylulose 5-phosphate from L-arabinose (bacterial route): step 1/3. Catalyzes the conversion of L-arabinose to L-ribulose. The polypeptide is L-arabinose isomerase (Geobacillus kaustophilus (strain HTA426)).